Here is a 384-residue protein sequence, read N- to C-terminus: Deoxyguanosinetriphosphate triphosphohydrolase-like protein (384 aa).

A disordered region spans residues 12–39 (ELASYASDPSKTRGRRHSEPPPENRTEF). Residues 28–39 (HSEPPPENRTEF) are compositionally biased toward basic and acidic residues. The 136-residue stretch at 73–208 (RLTHSLEVAQ…ANLADEVAYN (136 aa)) folds into the HD domain.

The protein belongs to the dGTPase family. Type 2 subfamily.

The sequence is that of Deoxyguanosinetriphosphate triphosphohydrolase-like protein from Bordetella parapertussis (strain 12822 / ATCC BAA-587 / NCTC 13253).